A 432-amino-acid chain; its full sequence is Glutamyl-tRNA reductase (432 aa).

Substrate contacts are provided by residues 49-52 (TCNR), Ser101, 106-108 (EPQ), and Gln112. Residue Cys50 is the Nucleophile of the active site. Residue 181-186 (GAGETI) participates in NADP(+) binding. The disordered stretch occupies residues 408-432 (PEKPGYRHPPVATPIVRTDDANPAP).

This sequence belongs to the glutamyl-tRNA reductase family. Homodimer.

It carries out the reaction (S)-4-amino-5-oxopentanoate + tRNA(Glu) + NADP(+) = L-glutamyl-tRNA(Glu) + NADPH + H(+). The protein operates within porphyrin-containing compound metabolism; protoporphyrin-IX biosynthesis; 5-aminolevulinate from L-glutamyl-tRNA(Glu): step 1/2. Its function is as follows. Catalyzes the NADPH-dependent reduction of glutamyl-tRNA(Glu) to glutamate 1-semialdehyde (GSA). This chain is Glutamyl-tRNA reductase, found in Xanthomonas campestris pv. campestris (strain 8004).